The following is a 490-amino-acid chain: ATP synthase subunit beta, chloroplastic (490 aa).

ATP is bound at residue 170–177 (GGAGVGKT).

This sequence belongs to the ATPase alpha/beta chains family. F-type ATPases have 2 components, CF(1) - the catalytic core - and CF(0) - the membrane proton channel. CF(1) has five subunits: alpha(3), beta(3), gamma(1), delta(1), epsilon(1). CF(0) has four main subunits: a(1), b(1), b'(1) and c(9-12).

Its subcellular location is the plastid. The protein resides in the chloroplast thylakoid membrane. The enzyme catalyses ATP + H2O + 4 H(+)(in) = ADP + phosphate + 5 H(+)(out). In terms of biological role, produces ATP from ADP in the presence of a proton gradient across the membrane. The catalytic sites are hosted primarily by the beta subunits. This chain is ATP synthase subunit beta, chloroplastic, found in Ipomoea quamoclit (Cypress vine).